The following is an 856-amino-acid chain: DNA mismatch repair protein MutS (856 aa).

An ATP-binding site is contributed by 618 to 625; sequence GPNMGGKS.

This sequence belongs to the DNA mismatch repair MutS family.

Functionally, this protein is involved in the repair of mismatches in DNA. It is possible that it carries out the mismatch recognition step. This protein has a weak ATPase activity. The sequence is that of DNA mismatch repair protein MutS from Shewanella putrefaciens (strain CN-32 / ATCC BAA-453).